Here is a 180-residue protein sequence, read N- to C-terminus: MLTKELVKEAREKAIRMLEKACIAITDEEKEKIEVTDFGLGVLYTFGLEILVYVNNERYCAKELVMFPRQICPEHRHPPIGSYLGKQETFRCRWGEVYLYVPGTPTPNPRARIPEEKKRYFTVWHEIVLRPGEQYTIPPNTLHWFQAGDEGAIVSEFSSQSIDEKDIFTDPNVKRIPEIV.

Residue K62 participates in D-fructose binding. H75 and H77 together coordinate Mn(2+). K86 is a binding site for D-fructose. Residues E88 and H143 each contribute to the Mn(2+) site. Residues E156, D166, and R175 each contribute to the D-fructose site.

This sequence belongs to the D-lyxose ketol-isomerase family. Homodimer; disulfide-linked. Stabilized by a disulfide bond between the two monomers of the dimeric enzyme and increased hydrophobicity at the dimer interface. It depends on Mn(2+) as a cofactor.

It catalyses the reaction D-lyxose = D-xylulose. Sugar isomerase that catalyzes the reversible isomerization of D-lyxose to D-xylulose. Is highly specific for the substrate D-lyxose, showing less than 2% activity towards mannose and other substrates reported for lyxose isomerases. This Thermofilum sp. (strain ex4484_79) protein is D-lyxose ketol-isomerase.